A 246-amino-acid polypeptide reads, in one-letter code: Putative carboxymethylenebutenolidase (246 aa).

Catalysis depends on residues cysteine 127, aspartate 183, and histidine 215.

The protein belongs to the dienelactone hydrolase family.

It carries out the reaction 2-(5-oxo-2,5-dihydrofuran-2-ylidene)acetate + H2O = 4-oxohex-2-enedioate + H(+). In Synechocystis sp. (strain ATCC 27184 / PCC 6803 / Kazusa), this protein is Putative carboxymethylenebutenolidase.